Here is a 584-residue protein sequence, read N- to C-terminus: Cation channel sperm-associated protein 2 (584 aa).

The Cytoplasmic segment spans residues M1–S106. A helical transmembrane segment spans residues I107–L129. The Extracellular portion of the chain corresponds to M130–W138. Residues P139–L164 traverse the membrane as a helical segment. The Cytoplasmic segment spans residues A165 to N173. The chain crosses the membrane as a helical span at residues A174–S198. Residues A199–S201 are Extracellular-facing. A helical transmembrane segment spans residues V202–A220. The Cytoplasmic portion of the chain corresponds to R221–K237. Residues S238 to F260 form a helical membrane-spanning segment. The Extracellular segment spans residues F261–S279. Residues D280–F292 constitute an intramembrane region (helical; Pore-forming). Residues T293–R312 lie on the Extracellular side of the membrane. Residues V313–V339 traverse the membrane as a helical segment. At T340–K584 the chain is on the cytoplasmic side. Residues S376–K386 show a composition bias toward polar residues. Disordered stretches follow at residues S376–T460 and A480–A510. 2 stretches are compositionally biased toward acidic residues: residues D390–S418 and E426–S443. Basic and acidic residues-rich tracts occupy residues D444–T460 and A483–A496.

This sequence belongs to the cation channel sperm-associated (TC 1.A.1.19) family. As to quaternary structure, component of the CatSper complex or CatSpermasome composed of the core pore-forming members CATSPER1, CATSPER2, CATSPER3 and CATSPER4 as well as auxiliary members CATSPERB, CATSPERG, CATSPERD, CATSPERE, CATSPERZ, C2CD6/CATSPERT, SLCO6C1, TMEM249, TMEM262 and EFCAB9. HSPA1 may be an additional auxiliary complex member. The core complex members CATSPER1, CATSPER2, CATSPER3 and CATSPER4 form a heterotetrameric channel. The auxiliary CATSPERB, CATSPERG, CATSPERD and CATSPERE subunits form a pavilion-like structure over the pore which stabilizes the complex through interactions with CATSPER4, CATSPER3, CATSPER1 and CATSPER2 respectively. SLCO6C1 interacts with CATSPERE and TMEM262/CATSPERH interacts with CATSPERB, further stabilizing the complex. C2CD6/CATSPERT interacts at least with CATSPERD and is required for targeting the CatSper complex in the flagellar membrane. Interacts with Ca(v)3.3/CACNA1I, leading to suppression of T-type calcium channel activity.

It is found in the cell projection. It localises to the cilium. The protein localises to the flagellum membrane. It carries out the reaction Ca(2+)(in) = Ca(2+)(out). Its activity is regulated as follows. Activated by intracellular alkalinization. Pore-forming subunit of the CatSper complex, a sperm-specific voltage-gated calcium channel that plays a central role in sperm cell hyperactivation. Controls calcium entry to mediate the hyperactivated motility, a step needed for sperm motility which is essential late in the preparation of sperm for fertilization. This Rattus norvegicus (Rat) protein is Cation channel sperm-associated protein 2 (Catsper2).